The following is a 425-amino-acid chain: Iron-sulfur cluster assembly factor IBA57 homolog, mitochondrial (425 aa).

Residues 1–28 (MPPRLRPGSVCSRCHFHRRSLSSTAFLA) constitute a mitochondrion transit peptide. Positions 403–425 (RQRQTKEDVHRAKSGTEQIEEED) are disordered.

The protein belongs to the GcvT family. CAF17/IBA57 subfamily.

It localises to the mitochondrion matrix. This is Iron-sulfur cluster assembly factor IBA57 homolog, mitochondrial (CAF17) from Coccidioides immitis (strain RS) (Valley fever fungus).